Reading from the N-terminus, the 391-residue chain is Argininosuccinate synthase (391 aa).

6 to 14 (AYSGGLDTT) lines the ATP pocket. Residue Tyr84 participates in L-citrulline binding. Gly114 provides a ligand contact to ATP. Residues Thr116, Asn120, and Asp121 each contribute to the L-aspartate site. Asn120 contacts L-citrulline. L-citrulline is bound by residues Arg124, Ser171, Ser180, Glu253, and Tyr265.

This sequence belongs to the argininosuccinate synthase family. Type 1 subfamily. Homotetramer.

Its subcellular location is the cytoplasm. The enzyme catalyses L-citrulline + L-aspartate + ATP = 2-(N(omega)-L-arginino)succinate + AMP + diphosphate + H(+). It participates in amino-acid biosynthesis; L-arginine biosynthesis; L-arginine from L-ornithine and carbamoyl phosphate: step 2/3. The sequence is that of Argininosuccinate synthase from Saccharolobus solfataricus (strain ATCC 35092 / DSM 1617 / JCM 11322 / P2) (Sulfolobus solfataricus).